A 396-amino-acid chain; its full sequence is Mannonate dehydratase (396 aa).

It belongs to the mannonate dehydratase family. Fe(2+) is required as a cofactor. Requires Mn(2+) as cofactor.

The enzyme catalyses D-mannonate = 2-dehydro-3-deoxy-D-gluconate + H2O. Its pathway is carbohydrate metabolism; pentose and glucuronate interconversion. Catalyzes the dehydration of D-mannonate. The polypeptide is Mannonate dehydratase (Serratia proteamaculans (strain 568)).